A 1519-amino-acid chain; its full sequence is Putative lipoprotein YghJ (1519 aa).

The signal sequence occupies residues 1-23 (MNKKFKYKKSLLAAILSATLLAG). Disordered regions lie at residues 22–107 (AGCD…GATC) and 226–247 (NAATDKAPSTHTSPVVPVTTPG). Residue Cys24 is the site of N-palmitoyl cysteine attachment. Cys24 carries S-diacylglycerol cysteine lipidation. Over residues 31 to 42 (SSSDTPPVDSGT) the composition is skewed to low complexity. Positions 51–77 (DPTPNPEPTPEPTPDPEPTPEPIPDPE) are enriched in pro residues. Residues 97–107 (GGSQRVTGATC) show a composition bias toward polar residues. Residues 234–247 (STHTSPVVPVTTPG) are compositionally biased toward low complexity. One can recognise a Peptidase M60 domain in the interval 1080–1380 (GNMQSTGLWA…MYAQLKEWAE (301 aa)). The tract at residues 1497–1519 (DLPKPEQGPETINQVTEHKMSAE) is disordered.

It to V.cholerae AcfD (VC_0845).

The protein localises to the cell membrane. Functionally, may be a substrate of the type II secretion system beta (T2SS-beta). This chain is Putative lipoprotein YghJ (yghJ), found in Escherichia coli O78:H11 (strain H10407 / ETEC).